Here is a 139-residue protein sequence, read N- to C-terminus: Aspartate 1-decarboxylase (139 aa).

Catalysis depends on serine 26, which acts as the Schiff-base intermediate with substrate; via pyruvic acid. A Pyruvic acid (Ser) modification is found at serine 26. Threonine 58 provides a ligand contact to substrate. The active-site Proton donor is tyrosine 59. Position 72-74 (72-74) interacts with substrate; the sequence is GGA.

This sequence belongs to the PanD family. As to quaternary structure, heterooctamer of four alpha and four beta subunits. Pyruvate serves as cofactor. Post-translationally, is synthesized initially as an inactive proenzyme, which is activated by self-cleavage at a specific serine bond to produce a beta-subunit with a hydroxyl group at its C-terminus and an alpha-subunit with a pyruvoyl group at its N-terminus.

The protein resides in the cytoplasm. The catalysed reaction is L-aspartate + H(+) = beta-alanine + CO2. It participates in cofactor biosynthesis; (R)-pantothenate biosynthesis; beta-alanine from L-aspartate: step 1/1. Its function is as follows. Catalyzes the pyruvoyl-dependent decarboxylation of aspartate to produce beta-alanine. This is Aspartate 1-decarboxylase from Microcystis aeruginosa (strain NIES-843 / IAM M-2473).